The sequence spans 254 residues: Dihydroorotate dehydrogenase B (NAD(+)), electron transfer subunit (254 aa).

One can recognise an FAD-binding FR-type domain in the interval 1–99; it reads MLQTEMKVIQ…LGPLGKGFDI (99 aa). FAD is bound by residues 50–53, 67–69, and 74–75; these read RPIS, LYR, and GT. [2Fe-2S] cluster-binding residues include Cys-218, Cys-223, Cys-226, and Cys-241.

This sequence belongs to the PyrK family. In terms of assembly, heterotetramer of 2 PyrK and 2 PyrD type B subunits. The cofactor is [2Fe-2S] cluster. FAD is required as a cofactor.

The protein operates within pyrimidine metabolism; UMP biosynthesis via de novo pathway; orotate from (S)-dihydroorotate (NAD(+) route): step 1/1. Responsible for channeling the electrons from the oxidation of dihydroorotate from the FMN redox center in the PyrD type B subunit to the ultimate electron acceptor NAD(+). The polypeptide is Dihydroorotate dehydrogenase B (NAD(+)), electron transfer subunit (Listeria monocytogenes serotype 4a (strain HCC23)).